Consider the following 812-residue polypeptide: Probable inorganic carbon transporter subunit DabA (812 aa).

4 residues coordinate Zn(2+): cysteine 338, aspartate 340, histidine 498, and cysteine 513.

Belongs to the inorganic carbon transporter (TC 9.A.2) DabA family. In terms of assembly, forms a complex with DabB. Requires Zn(2+) as cofactor.

It is found in the cell inner membrane. Its function is as follows. Part of an energy-coupled inorganic carbon pump. The sequence is that of Probable inorganic carbon transporter subunit DabA from Methylobacterium sp. (strain 4-46).